A 105-amino-acid polypeptide reads, in one-letter code: Large ribosomal subunit protein uL24 (105 aa).

It belongs to the universal ribosomal protein uL24 family. Part of the 50S ribosomal subunit.

One of two assembly initiator proteins, it binds directly to the 5'-end of the 23S rRNA, where it nucleates assembly of the 50S subunit. Its function is as follows. One of the proteins that surrounds the polypeptide exit tunnel on the outside of the subunit. This is Large ribosomal subunit protein uL24 from Thermotoga petrophila (strain ATCC BAA-488 / DSM 13995 / JCM 10881 / RKU-1).